The sequence spans 318 residues: MVSAYLLANFGGPRHSNDIEVFLTSLLTDRDVTGGFLPSFIHKRLFSFIAKKRALKVLPQYNCIGGFSPIYQDTELLAETLSSHLDAPVITFHRYLPDTHPHTIQQLKTLGDFPIVGVPLFPHFTYAVTGSIVRFIHNQLPLLNISWVSHFGNHPEFISCMMDHILKFLQSHDISTHDCCLLFSAHGLPMRHVNKGDPYNMQCEKSFRAISERLPNIETHLCYQSKFGPGKWLSPSTKDLCATLKTDKKHVLIVPFGFTSDHIETLYEIEKEYIAVLIDKGYQALRVPAIYQSSQWVESLATIIQSTPHVEKKSLIKS.

2 residues coordinate Fe cation: His186 and Glu264.

Belongs to the ferrochelatase family.

It localises to the cytoplasm. It catalyses the reaction heme b + 2 H(+) = protoporphyrin IX + Fe(2+). Its pathway is porphyrin-containing compound metabolism; protoheme biosynthesis; protoheme from protoporphyrin-IX: step 1/1. In terms of biological role, catalyzes the ferrous insertion into protoporphyrin IX. This Chlamydia caviae (strain ATCC VR-813 / DSM 19441 / 03DC25 / GPIC) (Chlamydophila caviae) protein is Ferrochelatase.